Reading from the N-terminus, the 543-residue chain is Excitatory amino acid transporter 1 (543 aa).

Residues 1–47 (MTKSNGEDPRAGSRMERFQQGVRQRTLLAKKKVQNITKDDVKGFLKR) are Cytoplasmic-facing. Residues 48–68 (NGFVLFTVIAVVVGSILGFSV) form a helical membrane-spanning segment. The Extracellular segment spans residues 69 to 86 (RSYHMTFRELKYFSFPGE). A helical membrane pass occupies residues 87 to 108 (LLMRMLQMLVLPLIVSSLVTGM). Residues 109-122 (AALDSKASGKMGLR) are Cytoplasmic-facing. The chain crosses the membrane as a helical span at residues 123 to 145 (AVVYYMTTTVIAVFIGIVIVIIV). The Extracellular portion of the chain corresponds to 146-237 (HPGKGTKEHM…MREEMIPVPG (92 aa)). 2 N-linked (GlcNAc...) asparagine glycosylation sites follow: Asn-206 and Asn-217. A helical transmembrane segment spans residues 238–261 (AVNGVNALGLVVFSMCFGLVIGNM). Topologically, residues 262–270 (KEQGKALKD) are cytoplasmic. Residues 271–298 (FFDSLNEAIMRLVAVIMWYAPIGILFLI) form a helical membrane-spanning segment. Residues 299–319 (AGKIAEMEDMGVVGGQLGMYT) lie on the Extracellular side of the membrane. The helical transmembrane segment at 320–341 (VTVIIGLLIHAVIVLPLLYFAV) threads the bilayer. Residues 342–346 (TRKNP) are Cytoplasmic-facing. The discontinuously helical intramembrane region spans 347 to 377 (WVFIGGILQALITALGTSSSSATLPITFKCL). Residue 364 to 366 (SSS) coordinates L-aspartate. Over 378–386 (EENNKVDKR) the chain is Cytoplasmic. The helical transmembrane segment at 387–413 (VTRFVLPVGATINMDGTALYEALAAIF) threads the bilayer. Na(+) contacts are provided by Gly-395, Thr-397, and Asn-399. L-aspartate is bound at residue Thr-403. Residues 414-426 (IAQVNNYDLNFGQ) are Extracellular-facing. Positions 427–460 (ILTISITATAASIGAAGIPQAGLVTMVIVLTSVG) form an intramembrane region, discontinuously helical. 444 to 448 (IPQAG) is an L-aspartate binding site. Residues 461-473 (LPTDDITLIIAVD) lie on the Extracellular side of the membrane. The chain crosses the membrane as a helical span at residues 474-495 (WFLDRLRTTTNVLGDSLGAGIV). L-aspartate is bound by residues Asp-477 and Asn-484. Positions 484 and 488 each coordinate Na(+). The Cytoplasmic segment spans residues 496-543 (EHLSRHELQSGDAEMGNSVIEENEMKKPYQLVSQENELEKPIDSETKM). Positions 521–543 (KKPYQLVSQENELEKPIDSETKM) are disordered. Residues 532 to 543 (ELEKPIDSETKM) are compositionally biased toward basic and acidic residues.

It belongs to the dicarboxylate/amino acid:cation symporter (DAACS) (TC 2.A.23) family. In terms of assembly, homotrimer. As to expression, detected in retina (at protein level).

The protein resides in the cell membrane. The catalysed reaction is K(+)(in) + L-glutamate(out) + 3 Na(+)(out) + H(+)(out) = K(+)(out) + L-glutamate(in) + 3 Na(+)(in) + H(+)(in). It catalyses the reaction K(+)(in) + L-aspartate(out) + 3 Na(+)(out) + H(+)(out) = K(+)(out) + L-aspartate(in) + 3 Na(+)(in) + H(+)(in). It carries out the reaction D-aspartate(out) + K(+)(in) + 3 Na(+)(out) + H(+)(out) = D-aspartate(in) + K(+)(out) + 3 Na(+)(in) + H(+)(in). Its function is as follows. Sodium-dependent, high-affinity amino acid transporter that mediates the uptake of L-glutamate and also L-aspartate and D-aspartate. Functions as a symporter that transports one amino acid molecule together with two or three Na(+) ions and one proton, in parallel with the counter-transport of one K(+) ion. Plays a redundant role in the rapid removal of released glutamate from the synaptic cleft, which is essential for terminating the postsynaptic action of glutamate. The chain is Excitatory amino acid transporter 1 (SLC1A3) from Ambystoma tigrinum (Eastern tiger salamander).